A 486-amino-acid chain; its full sequence is Protein kinase C and casein kinase substrate in neurons protein 2 (486 aa).

Positions 11–282 (VEVSSDSFWE…SIKAADAVED (272 aa)) constitute an F-BAR domain. The stretch at 25–274 (KRTVKRIDDG…TIYRELEQSI (250 aa)) forms a coiled coil. Lysine 53 is subject to N6-acetyllysine. Phosphoserine is present on serine 273. Phosphoserine; by PKC is present on serine 313. Positions 315-426 (REKKKAVDGV…NPFDEDTTSG (112 aa)) are disordered. Over residues 327-362 (TGINQTGDQSGQNKPGSNLSVPSNPAQSTQLQSSYN) the composition is skewed to polar residues. The NPF1 signature appears at 362-364 (NPF). Serine 373 is modified (phosphoserine; by IKKB). The span at 384-396 (NVSSYEKTQTYPT) shows a compositional bias: polar residues. A Phosphoserine modification is found at serine 399. Residues 404–416 (NNPFSSTDANGDS) show a composition bias toward polar residues. Positions 405–407 (NPF) match the NPF2 motif. The NPF3 signature appears at 417–419 (NPF). The 61-residue stretch at 426 to 486 (GTEVRVRALY…YPANYVEAIQ (61 aa)) folds into the SH3 domain. Serine 446 carries the post-translational modification Phosphoserine.

It belongs to the PACSIN family. Homodimer. May form heterooligomers with other PACSINs. Interacts (via NPF motifs) with EHD1 (via EH domain). Interacts (via NPF motifs) with EHD2 (via EH domain); this interaction probably stabilizes the caveolae. Interacts with EHD3. Interacts (via the SH3 domain) with MICALL1. Interacts with RAC1. Interacts (via SH3 domain) with DNM1, SYN1, SYNJ1 and WASL. Interacts (via F-BAR domain) with CAV1; this interaction induces membrane tubulation. Interacts with TRPV4. Forms a complex with EHD4 and MICALL1; the complex controls CDH5 trafficking and coordinates angiogenesis. In terms of processing, phosphorylated by casein kinase 2 (CK2). Phosphorylation by PKC probably decreases the membrane binding and tubulation capacities of PACSIN2, thereby modulating the lifetime of caveolae. Widely expressed (at protein level).

Its subcellular location is the cytoplasm. It is found in the cytoskeleton. The protein localises to the cytoplasmic vesicle membrane. The protein resides in the cell projection. It localises to the ruffle membrane. Its subcellular location is the early endosome. It is found in the recycling endosome membrane. The protein localises to the cell membrane. The protein resides in the membrane. It localises to the caveola. Its subcellular location is the cell junction. It is found in the adherens junction. In terms of biological role, regulates the morphogenesis and endocytosis of caveolae. Lipid-binding protein that is able to promote the tubulation of the phosphatidic acid-containing membranes it preferentially binds. Plays a role in intracellular vesicle-mediated transport. Involved in the endocytosis of cell-surface receptors like the EGF receptor, contributing to its internalization in the absence of EGF stimulus. Essential for endothelial organization in sprouting angiogenesis, modulates CDH5-based junctions. Facilitates endothelial front-rear polarity during migration by recruiting EHD4 and MICALL1 to asymmetric adherens junctions between leader and follower cells. This is Protein kinase C and casein kinase substrate in neurons protein 2 (Pacsin2) from Mus musculus (Mouse).